The following is a 254-amino-acid chain: Trans-aconitate 2-methyltransferase (254 aa).

Belongs to the methyltransferase superfamily. Tam family.

The protein resides in the cytoplasm. The enzyme catalyses trans-aconitate + S-adenosyl-L-methionine = (E)-3-(methoxycarbonyl)pent-2-enedioate + S-adenosyl-L-homocysteine. In terms of biological role, catalyzes the S-adenosylmethionine monomethyl esterification of trans-aconitate. The protein is Trans-aconitate 2-methyltransferase of Mycobacterium sp. (strain JLS).